A 281-amino-acid polypeptide reads, in one-letter code: HTH-type transcriptional activator RhaR (281 aa).

Positions 178–276 constitute an HTH araC/xylS-type domain; sequence DKLLAALAAS…GMSPGQWRQR (99 aa). DNA-binding regions (H-T-H motif) lie at residues 195-216 and 243-266; these read ERFC…RQQT and IGDI…SREI.

Binds DNA as a dimer.

The protein localises to the cytoplasm. In terms of biological role, activates expression of the rhaSR operon in response to L-rhamnose. The sequence is that of HTH-type transcriptional activator RhaR from Klebsiella pneumoniae subsp. pneumoniae (strain ATCC 700721 / MGH 78578).